Here is a 312-residue protein sequence, read N- to C-terminus: MNILTDPLKLKTSGCADANASKCAEGDGEGSVQVQLDPNVKIGSAKVFSIYGKGGIGKSTTSSNLSVAFSKLGKRVLQIGCDPKHDSTFTLTKRLIPTVIDVLEEVNFHSEELRPEDFVFEGYNGVMCLEAGGPPAGTGCGGYVVGQTVKLLKEHHLLEDTDVVIFDVLGDVVCGGFAAPLQHSERAMIVAANDFDSIFAANRIAAAIQAKSKNYGVRLAGIIANRSRETDQIDKFGAATGIQRVAHLPDLDVIRKSRLKKMTLFEMDHTDEILAVQQEYLRLATEMWEAKTPPVQGKPLKDRDIFDLLGFD.

ATP is bound by residues 55–60 (GIGKST) and lysine 84. Serine 59 lines the Mg(2+) pocket. 2 residues coordinate [4Fe-4S] cluster: cysteine 140 and cysteine 174. Residues 225–226 (NR) and 249–251 (PDL) each bind ATP.

This sequence belongs to the NifH/BchL/ChlL family. As to quaternary structure, homodimer. Protochlorophyllide reductase is composed of three subunits; BchL, BchN and BchB. [4Fe-4S] cluster is required as a cofactor.

The enzyme catalyses chlorophyllide a + oxidized 2[4Fe-4S]-[ferredoxin] + 2 ADP + 2 phosphate = protochlorophyllide a + reduced 2[4Fe-4S]-[ferredoxin] + 2 ATP + 2 H2O. Its pathway is porphyrin-containing compound metabolism; bacteriochlorophyll biosynthesis (light-independent). Functionally, component of the dark-operative protochlorophyllide reductase (DPOR) that uses Mg-ATP and reduced ferredoxin to reduce ring D of protochlorophyllide (Pchlide) to form chlorophyllide a (Chlide). This reaction is light-independent. The L component serves as a unique electron donor to the NB-component of the complex, and binds Mg-ATP. This chain is Light-independent protochlorophyllide reductase iron-sulfur ATP-binding protein, found in Rhodopseudomonas palustris (strain HaA2).